The sequence spans 396 residues: S-adenosylmethionine synthase (396 aa).

Histidine 16 provides a ligand contact to ATP. Aspartate 18 is a Mg(2+) binding site. Glutamate 44 contacts K(+). Residues glutamate 57 and glutamine 100 each coordinate L-methionine. Residues 100–110 are flexible loop; the sequence is QSPDINQGVDR. Residues 165-167, aspartate 240, 246-247, alanine 263, and lysine 267 each bind ATP; these read DAK and RK. Aspartate 240 lines the L-methionine pocket. L-methionine is bound at residue lysine 271.

The protein belongs to the AdoMet synthase family. Homotetramer; dimer of dimers. The cofactor is Mg(2+). K(+) is required as a cofactor.

It is found in the cytoplasm. It catalyses the reaction L-methionine + ATP + H2O = S-adenosyl-L-methionine + phosphate + diphosphate. Its pathway is amino-acid biosynthesis; S-adenosyl-L-methionine biosynthesis; S-adenosyl-L-methionine from L-methionine: step 1/1. Functionally, catalyzes the formation of S-adenosylmethionine (AdoMet) from methionine and ATP. The overall synthetic reaction is composed of two sequential steps, AdoMet formation and the subsequent tripolyphosphate hydrolysis which occurs prior to release of AdoMet from the enzyme. The sequence is that of S-adenosylmethionine synthase from Pseudomonas fluorescens (strain Pf0-1).